We begin with the raw amino-acid sequence, 148 residues long: 3-dehydroquinate dehydratase (148 aa).

Tyr23 (proton acceptor) is an active-site residue. Residues Asn75, His81, and Asp88 each coordinate substrate. His101 serves as the catalytic Proton donor. Residues 102 to 103 (LS) and Arg112 each bind substrate.

It belongs to the type-II 3-dehydroquinase family. Homododecamer.

The enzyme catalyses 3-dehydroquinate = 3-dehydroshikimate + H2O. It functions in the pathway metabolic intermediate biosynthesis; chorismate biosynthesis; chorismate from D-erythrose 4-phosphate and phosphoenolpyruvate: step 3/7. In terms of biological role, catalyzes a trans-dehydration via an enolate intermediate. In Xanthomonas campestris pv. campestris (strain 8004), this protein is 3-dehydroquinate dehydratase.